The primary structure comprises 178 residues: MSFLLPFLYVSGLSLILLFILVFIISQIWSRRTADLRLVSIQEKIRNAKADGKDFYELGVIFLSKKLYDQAIINFRYALNLWELDDKTGLANLYNTIGFTYTQIAQYDLALFYYEKALLHEPNYLVTLKNIGFIYEKTNNLVKAKDIYLQILKYDVDNKFATDKLNLLTGRLIRDDRI.

3 TPR repeats span residues Gly-52 to Asp-85, Ala-91 to Tyr-124, and Leu-125 to Asn-158.

The protein belongs to the ycf37 family.

It is found in the plastid. The protein resides in the chloroplast. This is an uncharacterized protein from Guillardia theta (Cryptophyte).